We begin with the raw amino-acid sequence, 267 residues long: Interleukin-2 receptor subunit alpha (267 aa).

The signal sequence occupies residues 1–21 (MEPHLLMLGFLSFTIVPGCWA). The region spanning 22–79 (ELCLYDPPEVPNATFKALSYKNGTILNCECKRGFRRLNELVYMACLGNSWSNNCQCTS) is the Sushi 1 domain. The Extracellular segment spans residues 22–235 (ELCLYDPPEV…ETFVFTKEYQ (214 aa)). Intrachain disulfides connect Cys24-Cys66, Cys49-Cys75, and Cys51-Cys77. Asn33 and Asn43 each carry an N-linked (GlcNAc...) asparagine glycan. Over residues 82–93 (HDNSREQVTPQP) the composition is skewed to polar residues. The tract at residues 82–108 (HDNSREQVTPQPEGQKEQQTTDTQKST) is disordered. The span at 98–108 (EQQTTDTQKST) shows a compositional bias: low complexity. The Sushi 2 domain occupies 118–181 (GHCREPPPWR…WTHPQLTCVD (64 aa)). 2 disulfides stabilise this stretch: Cys120/Cys163 and Cys147/Cys179. Residues 191-215 (SEESQGSRNSFPESEASCPTPNTDF) form a disordered region. The segment covering 192–215 (EESQGSRNSFPESEASCPTPNTDF) has biased composition (polar residues). A helical transmembrane segment spans residues 236 to 256 (VAVASCIFLLLSILLLSGFTW). Residues 257–267 (QHRWRKSRRTI) lie on the Cytoplasmic side of the membrane.

As to quaternary structure, non-covalent dimer of an alpha and a beta subunit. IL2R exists in 3 different forms: a high affinity dimer, an intermediate affinity monomer (beta subunit), and a low affinity monomer (alpha subunit). The high and intermediate affinity forms also associate with a gamma subunit.

The protein localises to the membrane. In terms of biological role, receptor for interleukin-2. The receptor is involved in the regulation of immune tolerance by controlling regulatory T cells (TREGs) activity. TREGs suppress the activation and expansion of autoreactive T-cells. The chain is Interleukin-2 receptor subunit alpha (Il2ra) from Rattus norvegicus (Rat).